The primary structure comprises 503 residues: D-alanine--D-alanyl carrier protein ligase (503 aa).

151-152 is an ATP binding site; the sequence is TS. D196 lines the D-alanine pocket. 291-296 contacts ATP; it reads NTYGPT. A D-alanine-binding site is contributed by V300. The ATP site is built by D382 and K491. K491 contacts D-alanine.

It belongs to the ATP-dependent AMP-binding enzyme family. DltA subfamily.

The protein localises to the cytoplasm. The enzyme catalyses holo-[D-alanyl-carrier protein] + D-alanine + ATP = D-alanyl-[D-alanyl-carrier protein] + AMP + diphosphate. The protein operates within cell wall biogenesis; lipoteichoic acid biosynthesis. Catalyzes the first step in the D-alanylation of lipoteichoic acid (LTA), the activation of D-alanine and its transfer onto the D-alanyl carrier protein (Dcp) DltC. In an ATP-dependent two-step reaction, forms a high energy D-alanyl-AMP intermediate, followed by transfer of the D-alanyl residue as a thiol ester to the phosphopantheinyl prosthetic group of the Dcp. D-alanylation of LTA plays an important role in modulating the properties of the cell wall in Gram-positive bacteria, influencing the net charge of the cell wall. The sequence is that of D-alanine--D-alanyl carrier protein ligase from Bacillus velezensis (strain DSM 23117 / BGSC 10A6 / LMG 26770 / FZB42) (Bacillus amyloliquefaciens subsp. plantarum).